A 164-amino-acid chain; its full sequence is Reticulon-like protein B22 (164 aa).

Positions 1 to 164 (MGEMGKAMGL…ILEQEAHSDT (164 aa)) constitute a Reticulon domain. The next 2 helical transmembrane spans lie at 30–50 (SLFS…GLLF) and 117–137 (LISG…SMLC).

The protein resides in the endoplasmic reticulum membrane. The sequence is that of Reticulon-like protein B22 (RTNLB22) from Arabidopsis thaliana (Mouse-ear cress).